Reading from the N-terminus, the 200-residue chain is Type 1 fimbriae regulatory protein FimB (200 aa).

The Tyr recombinase domain maps to 8 to 189 (KKRNFLTHSE…NAGRFYGIWD (182 aa)). Active-site residues include Arg-47, Lys-72, His-141, Arg-144, and His-167. Residue Tyr-176 is the O-(3'-phospho-DNA)-tyrosine intermediate of the active site.

It belongs to the 'phage' integrase family.

Its function is as follows. FimB is one of the 2 regulatory proteins which control the phase variation of type 1 fimbriae in E.coli. These proteins mediate the periodic inversion of a 300bp DNA segment that harbors the promoter for the fimbrial structural gene, fimA. FimB switches fimA on. The polypeptide is Type 1 fimbriae regulatory protein FimB (fimB) (Escherichia coli O157:H7).